We begin with the raw amino-acid sequence, 490 residues long: Probable cytosol aminopeptidase (490 aa).

2 residues coordinate Mn(2+): lysine 256 and aspartate 261. Lysine 268 is a catalytic residue. Mn(2+) is bound by residues aspartate 280, aspartate 340, and glutamate 342. Residue arginine 344 is part of the active site.

Belongs to the peptidase M17 family. Requires Mn(2+) as cofactor.

The protein localises to the cytoplasm. The enzyme catalyses Release of an N-terminal amino acid, Xaa-|-Yaa-, in which Xaa is preferably Leu, but may be other amino acids including Pro although not Arg or Lys, and Yaa may be Pro. Amino acid amides and methyl esters are also readily hydrolyzed, but rates on arylamides are exceedingly low.. The catalysed reaction is Release of an N-terminal amino acid, preferentially leucine, but not glutamic or aspartic acids.. Functionally, presumably involved in the processing and regular turnover of intracellular proteins. Catalyzes the removal of unsubstituted N-terminal amino acids from various peptides. The sequence is that of Probable cytosol aminopeptidase from Synechococcus sp. (strain CC9902).